Here is an 85-residue protein sequence, read N- to C-terminus: Acyl carrier protein ScoB (85 aa).

In terms of domain architecture, Carrier spans methionine 1–glutamine 77. Serine 38 carries the post-translational modification O-(pantetheine 4'-phosphoryl)serine.

The protein belongs to the acyl carrier protein (ACP) family. Pantetheine 4'-phosphate is required as a cofactor.

Its pathway is lipid metabolism; fatty acid metabolism. Its function is as follows. Acyl-carrier protein (ACP) involved in the biosynthesis of a unique class of isonitrile lipopeptides (INLPs). Is the dedicated ACP for the loading of activated acyl groups catalyzed by ScoC. This Streptomyces coeruleorubidus protein is Acyl carrier protein ScoB.